The primary structure comprises 382 residues: MNTPPFVCWIFCKVIDNFGDIGVSWRLARVLHRELGWQVHLWTDDVSALRALCPDLPDVPCVHQDIHVRTWHSDAADIDTAPVPDVVIETFACDLPENVLHIIRRHKPLWLNWEYLSAEESNERLHLMPSPQEGVQKYFWFMGFSEKSGGLIRERDYCEAVRFDTEALRERLMLPEKNASEWLLFGYRSDVWAKWLEMWRQAGSPMTLLLAGTQIIDSLKQSGVIPQDALQNDGDVFQTASVRLVKIPFVPQQDFDQLLHLADCAVIRGEDSFVRAQLAGKPFFWHIYPQDENVHLDKLHAFWDKAHGFYTPETVSAHRRLSDDLNGGEALSATQRLECWQTLQQHQNGWRQGAEDWSRYLFGQPSAPEKLAAFVSKHQKIR.

18–19 (FG) contacts dTDP. The active-site Proton acceptor is the D20. DTDP-beta-L-rhamnose-binding positions include D20, Y187, 250-252 (VPQ), and 268-272 (RGEDS). DTDP contacts are provided by residues Y187, 250–252 (VPQ), and 268–272 (RGEDS). The active site involves E270.

The protein belongs to the glycosyltransferase 104 family.

It catalyses the reaction dTDP-beta-L-rhamnose + L-arginyl-[protein] = N(omega)-(alpha-L-rhamnosyl)-L-arginyl-[protein] + dTDP + H(+). In terms of biological role, protein-arginine rhamnosyltransferase that catalyzes the transfer of a single rhamnose to elongation factor P (EF-P) on 'Lys-32', a modification required for EF-P-dependent rescue of polyproline stalled ribosomes. This is Protein-arginine rhamnosyltransferase from Neisseria meningitidis serogroup B / serotype 15 (strain H44/76).